We begin with the raw amino-acid sequence, 138 residues long: Phospholipase A2 homolog (138 aa).

Residues Met-1–Gly-16 form the signal peptide. Intrachain disulfides connect Cys-42–Cys-131, Cys-44–Cys-60, Cys-59–Cys-111, Cys-65–Cys-138, Cys-66–Cys-104, Cys-73–Cys-97, and Cys-91–Cys-102. The tract at residues Lys-121–Gly-133 is important for membrane-damaging activities in eukaryotes and bacteria; heparin-binding.

The protein belongs to the phospholipase A2 family. Group II subfamily. S49 sub-subfamily. Monomer. Expressed by the venom gland.

It localises to the secreted. In terms of biological role, snake venom phospholipase A2 homolog that lacks enzymatic activity. Shows high myotoxin activities and displays edema-inducing activities. Has cytotoxic activities against HUVEC cells (LC(50)=5.0 uL) and human lung adenocarcinoma A549 cells (LC(50)=5.2 uL). This chain is Phospholipase A2 homolog, found in Echis ocellatus (Ocellated saw-scaled viper).